Here is a 382-residue protein sequence, read N- to C-terminus: MINMKPQYYLGMMSGTSLDGVDIVLVDFSQDPQLILSDFFPMPEDLREKLTTLIQVGETTLQNLGELDHKLALLYSDCVNAFLQKNTFLPNQIQAIGCHGQTVWHSPNSQFPFTMQLGDMNLLAAKTGISVIGDFRRKDMAWGGQGAPLVPAFHEAVFSNSNFATAVLNIGGISNVSILFPNQAVIGFDTGPGNTLLDQWIEKHQGLRYDENGEWAAKGNVNKVLLDELLNEPFFSLPAPKSTGRELFNLVWLNHKIAKIREKLTALSVEMSFRPEDVQATLVELTVTSIVNALNQLQTDLPKRLLVCGGGAKNSLIMRGLHDNLLDWQVSTTTEQGFDIDYVEAAAFAWLAYCRINNLPANLPSVTGAKSAVSLGAIFPKD.

15–22 (GTSLDGVD) serves as a coordination point for ATP.

It belongs to the anhydro-N-acetylmuramic acid kinase family.

The catalysed reaction is 1,6-anhydro-N-acetyl-beta-muramate + ATP + H2O = N-acetyl-D-muramate 6-phosphate + ADP + H(+). Its pathway is amino-sugar metabolism; 1,6-anhydro-N-acetylmuramate degradation. It functions in the pathway cell wall biogenesis; peptidoglycan recycling. Its function is as follows. Catalyzes the specific phosphorylation of 1,6-anhydro-N-acetylmuramic acid (anhMurNAc) with the simultaneous cleavage of the 1,6-anhydro ring, generating MurNAc-6-P. Is required for the utilization of anhMurNAc either imported from the medium or derived from its own cell wall murein, and thus plays a role in cell wall recycling. This chain is Anhydro-N-acetylmuramic acid kinase, found in Haemophilus influenzae (strain ATCC 51907 / DSM 11121 / KW20 / Rd).